We begin with the raw amino-acid sequence, 29 residues long: NAD-reducing hydrogenase HoxS subunit delta (29 aa).

The span at 1 to 11 (MKHSEKNEIAS) shows a compositional bias: basic and acidic residues. Residues 1-29 (MKHSEKNEIASHELPTTPLDPVLAAGRES) form a disordered region.

The protein belongs to the [NiFe]/[NiFeSe] hydrogenase small subunit family. Tetramer of an alpha and a gamma subunits (flavin-containing dimer), and a delta and a nickel-containing beta subunits (hydrogenase dimer). Requires [4Fe-4S] cluster as cofactor. The cofactor is [3Fe-4S] cluster. [2Fe-2S] cluster serves as cofactor. It depends on FMN as a cofactor. Ni(2+) is required as a cofactor.

The protein resides in the cytoplasm. The catalysed reaction is H2 + NAD(+) = NADH + H(+). This chain is NAD-reducing hydrogenase HoxS subunit delta (hoxY), found in Rhodococcus opacus (Nocardia opaca).